Reading from the N-terminus, the 246-residue chain is UPF0246 protein str1967 (246 aa).

It belongs to the UPF0246 family.

This chain is UPF0246 protein str1967, found in Streptococcus thermophilus (strain CNRZ 1066).